A 318-amino-acid polypeptide reads, in one-letter code: Transcription factor FER-LIKE IRON DEFICIENCY-INDUCED TRANSCRIPTION FACTOR (318 aa).

The segment at 90-138 (FDGDSVRAGGEEDEEDYNDGDDSSATTTNNDGTRKTKTDRSRTLISERR) is disordered. Residues 100-111 (EEDEEDYNDGDD) are compositionally biased toward acidic residues. Residues 121–136 (GTRKTKTDRSRTLISE) are compositionally biased toward basic and acidic residues. The bHLH domain maps to 127-176 (TDRSRTLISERRRRGRMKDKLYALRSLVPNITKMDKASIVGDAVLYVQEL).

As to quaternary structure, homodimer. As to expression, expressed in roots and inflorescence, and to a lower extent, in leaves and stems. In roots, confined to the outer cell layers, specifically in the differentiation zone. Also detected in the endodermis and inner tissues of the central cylinder.

It localises to the nucleus. In terms of biological role, transcription factor. Essential protein involved in iron uptake responses. Regulates FRO2 at the level of mRNA accumulation and IRT1 at the level of protein accumulation. Confers enhanced iron mobilization responses at low iron supply. The protein is Transcription factor FER-LIKE IRON DEFICIENCY-INDUCED TRANSCRIPTION FACTOR (FIT) of Arabidopsis thaliana (Mouse-ear cress).